The sequence spans 489 residues: Rhamnulokinase (489 aa).

ATP is bound at residue 13-17; it reads ASSGR. Residues Cys-68 and Cys-222 are joined by a disulfide bond. Residues Gly-83 and 236–238 contribute to the substrate site; that span reads HDT. The Proton acceptor role is filled by Asp-237. Residue Thr-259 participates in ATP binding. Asn-296 contacts substrate. Gln-304 lines the ATP pocket. Residues Cys-353 and Cys-370 are joined by a disulfide bond. Gly-402 is a binding site for ATP. Cys-413 and Cys-417 are joined by a disulfide.

The protein belongs to the rhamnulokinase family. As to quaternary structure, monomer. It depends on Mg(2+) as a cofactor.

The catalysed reaction is L-rhamnulose + ATP = L-rhamnulose 1-phosphate + ADP + H(+). It participates in carbohydrate degradation; L-rhamnose degradation; glycerone phosphate from L-rhamnose: step 2/3. Its function is as follows. Involved in the catabolism of L-rhamnose (6-deoxy-L-mannose). Catalyzes the transfer of the gamma-phosphate group from ATP to the 1-hydroxyl group of L-rhamnulose to yield L-rhamnulose 1-phosphate. The chain is Rhamnulokinase from Escherichia coli O139:H28 (strain E24377A / ETEC).